Consider the following 240-residue polypeptide: Manganese transport system ATP-binding protein MntB (240 aa).

The 233-residue stretch at 1–233 (MEIQGLTIAY…KIQFAYGDAP (233 aa)) folds into the ABC transporter domain. 33–40 (GPNGAGKS) is a binding site for ATP.

The protein belongs to the ABC transporter superfamily.

It is found in the cell membrane. Its function is as follows. This protein is probably a component of a manganese permease, a binding protein-dependent, ATP-driven transport system. Probably responsible for energy coupling to the transport system. In Listeria monocytogenes serovar 1/2a (strain ATCC BAA-679 / EGD-e), this protein is Manganese transport system ATP-binding protein MntB (mntB).